Reading from the N-terminus, the 480-residue chain is Reticulophagy regulator 1 (480 aa).

Positions Met1 to Ala10 are enriched in basic and acidic residues. The interval Met1 to Glu41 is disordered. The Cytoplasmic portion of the chain corresponds to Met1–Ala43. The chain crosses the membrane as a helical span at residues Ala44–Trp64. Residues Arg65–Ser78 are Lumenal-facing. The interval Asp67–Phe216 is reticulon homology domain. Residues Leu79–Val99 form a helical membrane-spanning segment. At Tyr100–His101 the chain is on the cytoplasmic side. A helical transmembrane segment spans residues Leu102–Ser122. The Lumenal portion of the chain corresponds to Arg123–Thr191. Ser132 is modified (phosphoserine). A Phosphoserine; by CAMK2B modification is found at Ser134. Phosphoserine is present on Ser136. A helical membrane pass occupies residues Ile192–Leu212. The Cytoplasmic portion of the chain corresponds to Cys213 to His480. A compositionally biased stretch (polar residues) spans Phe302 to Asp313. The disordered stretch occupies residues Phe302–Leu348. The span at Asp317–Ser331 shows a compositional bias: basic and acidic residues. Positions Asp436 to Leu441 match the LIR motif motif. Residues Glu450–His480 form a disordered region. Polar residues predominate over residues Gly454–Leu473.

This sequence belongs to the RETREG family. As to quaternary structure, homooligomer; oligomerization is enhanced following endoplasmic reticulum stress and is mediated by the reticulon homology domain. Interacts with ATG8 family modifier proteins MAP1LC3A, MAP1LC3B, GABARAP, GABARAPL1 and GABARAPL2. Phosphorylation at Ser-134 by CAMK2B enhances oligomerization and membrane scission and reticulophagy activity.

The protein resides in the golgi apparatus. It localises to the cis-Golgi network membrane. It is found in the endoplasmic reticulum membrane. Its function is as follows. Endoplasmic reticulum (ER)-anchored autophagy regulator which mediates ER delivery into lysosomes through sequestration into autophagosomes. Promotes membrane remodeling and ER scission via its membrane bending capacity and targets the fragments into autophagosomes via interaction with ATG8 family proteins. Active under basal conditions. Required for collagen quality control in a LIR motif-dependent manner. Required for long-term survival of nociceptive and autonomic ganglion neurons. The protein is Reticulophagy regulator 1 of Rattus norvegicus (Rat).